A 481-amino-acid polypeptide reads, in one-letter code: Lincomycin resistance protein (481 aa).

14 helical membrane-spanning segments follow: residues 30–50 (WVTL…VTVV), 67–87 (QLTW…MVGG), 99–119 (LLFG…APNL), 127–147 (FGQG…IACS), 162–182 (VASV…QLFS), 185–205 (WIFL…LLLV), 215–235 (PVDL…IFGV), 245–265 (LPLA…FVAV), 285–305 (LVAN…FFLL), 318–338 (IEAG…CVLV), 340–360 (GLIE…LAGP), 374–394 (LLTS…GLVA), 421–441 (LGGA…HLGG), and 446–466 (FTVA…AVLA).

It belongs to the major facilitator superfamily. TCR/Tet family.

The protein localises to the cell membrane. Functionally, proton-dependent transporter. May mediate the efflux of lincomycin. The polypeptide is Lincomycin resistance protein (lmrA) (Streptomyces lincolnensis).